We begin with the raw amino-acid sequence, 387 residues long: 3-ketoacyl-CoA thiolase (387 aa).

C91 functions as the Acyl-thioester intermediate in the catalytic mechanism. Catalysis depends on proton acceptor residues H343 and C373.

It belongs to the thiolase-like superfamily. Thiolase family. In terms of assembly, heterotetramer of two alpha chains (FadB) and two beta chains (FadA).

Its subcellular location is the cytoplasm. The catalysed reaction is an acyl-CoA + acetyl-CoA = a 3-oxoacyl-CoA + CoA. The protein operates within lipid metabolism; fatty acid beta-oxidation. In terms of biological role, catalyzes the final step of fatty acid oxidation in which acetyl-CoA is released and the CoA ester of a fatty acid two carbons shorter is formed. The polypeptide is 3-ketoacyl-CoA thiolase (Shewanella sp. (strain MR-4)).